Here is a 286-residue protein sequence, read N- to C-terminus: Bifunctional protein FolD (286 aa).

NADP(+) is bound by residues 165–167, Ser-190, and Val-231; that span reads GRS.

Belongs to the tetrahydrofolate dehydrogenase/cyclohydrolase family. In terms of assembly, homodimer.

The catalysed reaction is (6R)-5,10-methylene-5,6,7,8-tetrahydrofolate + NADP(+) = (6R)-5,10-methenyltetrahydrofolate + NADPH. It catalyses the reaction (6R)-5,10-methenyltetrahydrofolate + H2O = (6R)-10-formyltetrahydrofolate + H(+). It functions in the pathway one-carbon metabolism; tetrahydrofolate interconversion. Its function is as follows. Catalyzes the oxidation of 5,10-methylenetetrahydrofolate to 5,10-methenyltetrahydrofolate and then the hydrolysis of 5,10-methenyltetrahydrofolate to 10-formyltetrahydrofolate. This is Bifunctional protein FolD from Bacillus cereus (strain ATCC 10987 / NRS 248).